The primary structure comprises 149 residues: 2S seed storage albumin protein (149 aa).

The N-terminal stretch at 1–22 (MKLFIILATATLLIAATQATYP) is a signal peptide. 4 cysteine pairs are disulfide-bonded: Cys-38–Cys-98, Cys-52–Cys-87, Cys-88–Cys-133, and Cys-100–Cys-140. An igE-binding region spans residues 121–128 (EGVRDLKE).

This sequence belongs to the 2S seed storage albumins family. In terms of tissue distribution, expressed in seeds (at protein level).

Seed storage protein. The chain is 2S seed storage albumin protein from Fagopyrum esculentum (Common buckwheat).